A 519-amino-acid chain; its full sequence is 2-isopropylmalate synthase (519 aa).

Residues 5-267 form the Pyruvate carboxyltransferase domain; it reads VKIFDTTLRD…NTNIRSHEIS (263 aa). Mn(2+) is bound by residues D14, H202, H204, and N238. The tract at residues 392 to 519 is regulatory domain; it reads KLLYLQASSG…KKQQTQTAGV (128 aa).

This sequence belongs to the alpha-IPM synthase/homocitrate synthase family. LeuA type 1 subfamily. Homodimer. It depends on Mn(2+) as a cofactor.

The protein localises to the cytoplasm. It catalyses the reaction 3-methyl-2-oxobutanoate + acetyl-CoA + H2O = (2S)-2-isopropylmalate + CoA + H(+). The protein operates within amino-acid biosynthesis; L-leucine biosynthesis; L-leucine from 3-methyl-2-oxobutanoate: step 1/4. In terms of biological role, catalyzes the condensation of the acetyl group of acetyl-CoA with 3-methyl-2-oxobutanoate (2-ketoisovalerate) to form 3-carboxy-3-hydroxy-4-methylpentanoate (2-isopropylmalate). The protein is 2-isopropylmalate synthase of Pseudoalteromonas atlantica (strain T6c / ATCC BAA-1087).